The primary structure comprises 189 residues: ADP-ribosylation factor H (189 aa).

GTP is bound by residues 34-40, 75-79, and 134-137; these read DGAGKST, DVGGQ, and NKQD.

Belongs to the small GTPase superfamily. Arf family.

The protein resides in the golgi apparatus. In terms of biological role, GTP-binding protein that may be involved in protein trafficking. May modulate vesicle budding and uncoating within the Golgi apparatus. This is ADP-ribosylation factor H (arrH) from Dictyostelium discoideum (Social amoeba).